The following is a 243-amino-acid chain: Ubiquinone/menaquinone biosynthesis C-methyltransferase UbiE (243 aa).

S-adenosyl-L-methionine-binding positions include threonine 69, aspartate 90, and 116–117 (DA).

The protein belongs to the class I-like SAM-binding methyltransferase superfamily. MenG/UbiE family.

It catalyses the reaction a 2-demethylmenaquinol + S-adenosyl-L-methionine = a menaquinol + S-adenosyl-L-homocysteine + H(+). The catalysed reaction is a 2-methoxy-6-(all-trans-polyprenyl)benzene-1,4-diol + S-adenosyl-L-methionine = a 5-methoxy-2-methyl-3-(all-trans-polyprenyl)benzene-1,4-diol + S-adenosyl-L-homocysteine + H(+). It participates in quinol/quinone metabolism; menaquinone biosynthesis; menaquinol from 1,4-dihydroxy-2-naphthoate: step 2/2. The protein operates within cofactor biosynthesis; ubiquinone biosynthesis. Methyltransferase required for the conversion of demethylmenaquinol (DMKH2) to menaquinol (MKH2) and the conversion of 2-polyprenyl-6-methoxy-1,4-benzoquinol (DDMQH2) to 2-polyprenyl-3-methyl-6-methoxy-1,4-benzoquinol (DMQH2). The protein is Ubiquinone/menaquinone biosynthesis C-methyltransferase UbiE of Ralstonia pickettii (strain 12J).